Consider the following 458-residue polypeptide: Bifunctional protein GlmU (458 aa).

A pyrophosphorylase region spans residues 1 to 231; that stretch reads MSNRALSVVV…QTEVEGVNNR (231 aa). UDP-N-acetyl-alpha-D-glucosamine contacts are provided by residues 11–14, K25, Q78, 83–84, 105–107, G142, E156, N171, and N229; these read LAAG, GT, and YGD. D107 is a Mg(2+) binding site. Residue N229 coordinates Mg(2+). The tract at residues 232-252 is linker; that stretch reads LQLARLERLFQREQAERLLLA. The N-acetyltransferase stretch occupies residues 253–458; that stretch reads GVMLSDPDRF…ANWTRPVKKK (206 aa). UDP-N-acetyl-alpha-D-glucosamine is bound by residues R335 and K353. Residue H365 is the Proton acceptor of the active site. Residues Y368 and N379 each coordinate UDP-N-acetyl-alpha-D-glucosamine. Residues A382, 388 to 389, S407, A425, and R442 contribute to the acetyl-CoA site; that span reads NY.

It in the N-terminal section; belongs to the N-acetylglucosamine-1-phosphate uridyltransferase family. The protein in the C-terminal section; belongs to the transferase hexapeptide repeat family. Homotrimer. Mg(2+) serves as cofactor.

It localises to the cytoplasm. It catalyses the reaction alpha-D-glucosamine 1-phosphate + acetyl-CoA = N-acetyl-alpha-D-glucosamine 1-phosphate + CoA + H(+). The catalysed reaction is N-acetyl-alpha-D-glucosamine 1-phosphate + UTP + H(+) = UDP-N-acetyl-alpha-D-glucosamine + diphosphate. The protein operates within nucleotide-sugar biosynthesis; UDP-N-acetyl-alpha-D-glucosamine biosynthesis; N-acetyl-alpha-D-glucosamine 1-phosphate from alpha-D-glucosamine 6-phosphate (route II): step 2/2. It participates in nucleotide-sugar biosynthesis; UDP-N-acetyl-alpha-D-glucosamine biosynthesis; UDP-N-acetyl-alpha-D-glucosamine from N-acetyl-alpha-D-glucosamine 1-phosphate: step 1/1. It functions in the pathway bacterial outer membrane biogenesis; LPS lipid A biosynthesis. Its function is as follows. Catalyzes the last two sequential reactions in the de novo biosynthetic pathway for UDP-N-acetylglucosamine (UDP-GlcNAc). The C-terminal domain catalyzes the transfer of acetyl group from acetyl coenzyme A to glucosamine-1-phosphate (GlcN-1-P) to produce N-acetylglucosamine-1-phosphate (GlcNAc-1-P), which is converted into UDP-GlcNAc by the transfer of uridine 5-monophosphate (from uridine 5-triphosphate), a reaction catalyzed by the N-terminal domain. This Sodalis glossinidius (strain morsitans) protein is Bifunctional protein GlmU.